The sequence spans 160 residues: MKIRVGFGFDVHQLVTGRELWLGGIKFEHELGLLGHSDADVLIHAICDALLGAANMRDIGYHFPDTAGEFKNIDSKILLAETVDLIAAKGYKVGNVDATICAERPKLKARIPEMQLVLAHLMRIDVDDVSVKATTTEKLGFTGREEGISAYATVLIEKAE.

A divalent metal cation is bound by residues Asp-10 and His-12. 4-CDP-2-C-methyl-D-erythritol 2-phosphate is bound by residues 10 to 12 and 36 to 37; these read DVH and HS. His-44 is a binding site for a divalent metal cation. 4-CDP-2-C-methyl-D-erythritol 2-phosphate contacts are provided by residues 58–60, 134–137, Phe-141, and Arg-144; these read DIG and TTTE.

Belongs to the IspF family. As to quaternary structure, homotrimer. A divalent metal cation is required as a cofactor.

The enzyme catalyses 4-CDP-2-C-methyl-D-erythritol 2-phosphate = 2-C-methyl-D-erythritol 2,4-cyclic diphosphate + CMP. It participates in isoprenoid biosynthesis; isopentenyl diphosphate biosynthesis via DXP pathway; isopentenyl diphosphate from 1-deoxy-D-xylulose 5-phosphate: step 4/6. In terms of biological role, involved in the biosynthesis of isopentenyl diphosphate (IPP) and dimethylallyl diphosphate (DMAPP), two major building blocks of isoprenoid compounds. Catalyzes the conversion of 4-diphosphocytidyl-2-C-methyl-D-erythritol 2-phosphate (CDP-ME2P) to 2-C-methyl-D-erythritol 2,4-cyclodiphosphate (ME-CPP) with a corresponding release of cytidine 5-monophosphate (CMP). The chain is 2-C-methyl-D-erythritol 2,4-cyclodiphosphate synthase from Phocaeicola vulgatus (strain ATCC 8482 / DSM 1447 / JCM 5826 / CCUG 4940 / NBRC 14291 / NCTC 11154) (Bacteroides vulgatus).